A 160-amino-acid chain; its full sequence is MSIIKKPDLSDPDLRAKLAKGMGHNYYGEPAWPNDILYMFPICILGALGLIAGLAILDPAMIGEPADPFATPLEILPEWYLYPTFQILRILPNKLLGIAGMAAIPLGLMLVPFIESVNKFQNPFRRPIAMTVFLFGTAAALWLGAGATFPIDKSLTLGLF.

The next 3 helical transmembrane spans lie at 36–56 (ILYMFPICILGALGLIAGLAI), 95–115 (LLGIAGMAAIPLGLMLVPFIE), and 127–147 (PIAMTVFLFGTAAALWLGAGA).

It belongs to the cytochrome b family. PetD subfamily. The 4 large subunits of the cytochrome b6-f complex are cytochrome b6, subunit IV (17 kDa polypeptide, PetD), cytochrome f and the Rieske protein, while the 4 small subunits are PetG, PetL, PetM and PetN. The complex functions as a dimer.

The protein localises to the cellular thylakoid membrane. Component of the cytochrome b6-f complex, which mediates electron transfer between photosystem II (PSII) and photosystem I (PSI), cyclic electron flow around PSI, and state transitions. The polypeptide is Cytochrome b6-f complex subunit 4 (Synechocystis sp. (strain ATCC 27184 / PCC 6803 / Kazusa)).